The following is a 569-amino-acid chain: Mitochondrial import receptor subunit tomm-70 (569 aa).

Residues 1–12 (MVETTGISDQTK) lie on the Mitochondrial intermembrane side of the membrane. The helical transmembrane segment at 13 to 32 (KVLIGVAAAATVAGVGYLVY) threads the bilayer. At 33-569 (KSFGGSDLER…KRAAEMLDMY (537 aa)) the chain is on the cytoplasmic side. 4 TPR repeats span residues 44 to 77 (LEEI…AGPN), 119 to 152 (TKAY…DSSL), 221 to 254 (DQKQ…PPAM), and 510 to 544 (LHLL…APPR).

The protein belongs to the Tom70 family. Forms part of the preprotein translocase complex of the outer mitochondrial membrane (TOM complex). In terms of tissue distribution, expressed in body wall muscle cells, the pharynx and structures in the tail.

Its subcellular location is the mitochondrion outer membrane. Receptor that accelerates the import of all mitochondrial precursor proteins. The polypeptide is Mitochondrial import receptor subunit tomm-70 (Caenorhabditis elegans).